A 921-amino-acid polypeptide reads, in one-letter code: Alanine--tRNA ligase (921 aa).

Residues His-602, His-606, Cys-706, and His-710 each contribute to the Zn(2+) site.

This sequence belongs to the class-II aminoacyl-tRNA synthetase family. Zn(2+) serves as cofactor.

It is found in the cytoplasm. It carries out the reaction tRNA(Ala) + L-alanine + ATP = L-alanyl-tRNA(Ala) + AMP + diphosphate. Its function is as follows. Catalyzes the attachment of alanine to tRNA(Ala) in a two-step reaction: alanine is first activated by ATP to form Ala-AMP and then transferred to the acceptor end of tRNA(Ala). Also edits incorrectly charged Ser-tRNA(Ala) and Gly-tRNA(Ala) via its editing domain. This chain is Alanine--tRNA ligase, found in Hyperthermus butylicus (strain DSM 5456 / JCM 9403 / PLM1-5).